The sequence spans 475 residues: MHFETVIGLEVHVELKTDSKMFSPSPAHFGAEPNSNTNVIDLAYPGVLPVVNKRAVDWAMRAAMALNMEIATESKFDRKNYFYPDNPKAYQISQFDQPIGENGYIDIEVDGETKRIGITRLHMEEDAGKSTHKGEYSLVDLNRQGTPLIEIVSEPDIRSPIEAYAYLEKLRSIIQYTGVSDVKMEEGSLRCDANISLRPYGQEKFGTKAELKNLNSFNYVRKGLEYEEKRQEEELLNGGEIGQETRRFDESTGKTILMRVKEGSDDYRYFPEPDIVPLYIDDAWKKRVRQTIPELPDERKAKYVNELGLPAYDAHVLTLTKEMSDFFESTIEHGADVKLTSNWLMGGVNEYLNKNQVELLDTKLTPENLAGMIKLIEDGTMSSKIAKKVFPELAAKGGNAKQIMEDNGLVQISDEATLLKFVNEALDNNEQSVEDYKNGKGKAMGFLVGQIMKASKGQANPQLVNQLLKQELDKR.

This sequence belongs to the GatB/GatE family. GatB subfamily. As to quaternary structure, heterotrimer of A, B and C subunits.

It catalyses the reaction L-glutamyl-tRNA(Gln) + L-glutamine + ATP + H2O = L-glutaminyl-tRNA(Gln) + L-glutamate + ADP + phosphate + H(+). It carries out the reaction L-aspartyl-tRNA(Asn) + L-glutamine + ATP + H2O = L-asparaginyl-tRNA(Asn) + L-glutamate + ADP + phosphate + 2 H(+). Its function is as follows. Allows the formation of correctly charged Asn-tRNA(Asn) or Gln-tRNA(Gln) through the transamidation of misacylated Asp-tRNA(Asn) or Glu-tRNA(Gln) in organisms which lack either or both of asparaginyl-tRNA or glutaminyl-tRNA synthetases. The reaction takes place in the presence of glutamine and ATP through an activated phospho-Asp-tRNA(Asn) or phospho-Glu-tRNA(Gln). The sequence is that of Aspartyl/glutamyl-tRNA(Asn/Gln) amidotransferase subunit B from Staphylococcus aureus (strain bovine RF122 / ET3-1).